The following is a 490-amino-acid chain: ATP synthase subunit beta, chloroplastic (490 aa).

Glycine 170 to threonine 177 contacts ATP.

Belongs to the ATPase alpha/beta chains family. In terms of assembly, F-type ATPases have 2 components, CF(1) - the catalytic core - and CF(0) - the membrane proton channel. CF(1) has five subunits: alpha(3), beta(3), gamma(1), delta(1), epsilon(1). CF(0) has four main subunits: a(1), b(1), b'(1) and c(9-12).

It is found in the plastid. Its subcellular location is the chloroplast thylakoid membrane. It catalyses the reaction ATP + H2O + 4 H(+)(in) = ADP + phosphate + 5 H(+)(out). Functionally, produces ATP from ADP in the presence of a proton gradient across the membrane. The catalytic sites are hosted primarily by the beta subunits. The chain is ATP synthase subunit beta, chloroplastic from Ipomoea wrightii (Wright's morning glory).